Consider the following 150-residue polypeptide: Small ribosomal subunit protein eS19 (150 aa).

This sequence belongs to the eukaryotic ribosomal protein eS19 family. As to quaternary structure, part of the 30S ribosomal subunit.

Functionally, may be involved in maturation of the 30S ribosomal subunit. The chain is Small ribosomal subunit protein eS19 from Pyrococcus horikoshii (strain ATCC 700860 / DSM 12428 / JCM 9974 / NBRC 100139 / OT-3).